Consider the following 166-residue polypeptide: Large ribosomal subunit protein uL10 (166 aa).

The protein belongs to the universal ribosomal protein uL10 family. Part of the ribosomal stalk of the 50S ribosomal subunit. The N-terminus interacts with L11 and the large rRNA to form the base of the stalk. The C-terminus forms an elongated spine to which L12 dimers bind in a sequential fashion forming a multimeric L10(L12)X complex.

In terms of biological role, forms part of the ribosomal stalk, playing a central role in the interaction of the ribosome with GTP-bound translation factors. The sequence is that of Large ribosomal subunit protein uL10 from Staphylococcus haemolyticus (strain JCSC1435).